The following is a 948-amino-acid chain: Isoleucine--tRNA ligase (948 aa).

Positions 58–68 (PYANGDIHIGH) match the 'HIGH' region motif. Glu-566 is an L-isoleucyl-5'-AMP binding site. Positions 607–611 (KMSKS) match the 'KMSKS' region motif. Lys-610 serves as a coordination point for ATP. Zn(2+)-binding residues include Cys-911, Cys-914, Cys-931, and Cys-934.

It belongs to the class-I aminoacyl-tRNA synthetase family. IleS type 1 subfamily. In terms of assembly, monomer. Requires Zn(2+) as cofactor.

The protein resides in the cytoplasm. It carries out the reaction tRNA(Ile) + L-isoleucine + ATP = L-isoleucyl-tRNA(Ile) + AMP + diphosphate. Catalyzes the attachment of isoleucine to tRNA(Ile). As IleRS can inadvertently accommodate and process structurally similar amino acids such as valine, to avoid such errors it has two additional distinct tRNA(Ile)-dependent editing activities. One activity is designated as 'pretransfer' editing and involves the hydrolysis of activated Val-AMP. The other activity is designated 'posttransfer' editing and involves deacylation of mischarged Val-tRNA(Ile). The chain is Isoleucine--tRNA ligase from Vibrio vulnificus (strain YJ016).